The chain runs to 229 residues: Uracil-DNA glycosylase (229 aa).

Asp-64 (proton acceptor) is an active-site residue.

It belongs to the uracil-DNA glycosylase (UDG) superfamily. UNG family.

The protein resides in the cytoplasm. The catalysed reaction is Hydrolyzes single-stranded DNA or mismatched double-stranded DNA and polynucleotides, releasing free uracil.. In terms of biological role, excises uracil residues from the DNA which can arise as a result of misincorporation of dUMP residues by DNA polymerase or due to deamination of cytosine. This is Uracil-DNA glycosylase from Klebsiella pneumoniae subsp. pneumoniae (strain ATCC 700721 / MGH 78578).